Reading from the N-terminus, the 178-residue chain is Probable chorismate pyruvate-lyase (178 aa).

Substrate-binding residues include Met37, Arg78, Leu114, and Glu165.

It belongs to the UbiC family.

Its subcellular location is the cytoplasm. The catalysed reaction is chorismate = 4-hydroxybenzoate + pyruvate. The protein operates within cofactor biosynthesis; ubiquinone biosynthesis. Functionally, removes the pyruvyl group from chorismate, with concomitant aromatization of the ring, to provide 4-hydroxybenzoate (4HB) for the ubiquinone pathway. This is Probable chorismate pyruvate-lyase from Aeromonas salmonicida (strain A449).